Reading from the N-terminus, the 82-residue chain is Immediate early response 3-interacting protein 1 (82 aa).

2 consecutive transmembrane segments (helical) span residues 2 to 22 (AFTL…IAVL) and 62 to 82 (VMRV…LLFG).

The protein belongs to the YOS1 family.

Its subcellular location is the endoplasmic reticulum membrane. Regulator of endoplasmic reticulum secretion that acts as a key determinant of brain size. Required for secretion of extracellular matrix proteins. Required for correct brain development by depositing sufficient extracellular matrix proteins for tissue integrity and the proliferation of neural progenitors. Acts as a regulator of the unfolded protein response (UPR). The protein is Immediate early response 3-interacting protein 1 of Mus musculus (Mouse).